The following is a 603-amino-acid chain: Serine/threonine-protein kinase HAL4/SAT4 (603 aa).

3 stretches are compositionally biased toward polar residues: residues 1–15 (MTGMNDNNAAIPQQT), 30–60 (RSGSRSSRQGKASSNIQPPSNINTNVPSASK), and 68–85 (TPTTATPRVVSNPSNTAG). Disordered regions lie at residues 1–86 (MTGM…TAGV), 150–171 (LSPKFSHHSNSNTAITPAPTPT), and 267–301 (DKYPEGAPTSGALNCPERDIYRSDQKDSKNNTHNI). A compositionally biased stretch (low complexity) spans 159–171 (NSNTAITPAPTPT). A compositionally biased stretch (basic and acidic residues) spans 282–296 (PERDIYRSDQKDSKN). The Protein kinase domain maps to 316 to 590 (GRCQEVLGKG…GKQILNSEWG (275 aa)). Residues 322–330 (LGKGAFGVV) and lysine 353 contribute to the ATP site. Catalysis depends on aspartate 449, which acts as the Proton acceptor.

It belongs to the protein kinase superfamily. Ser/Thr protein kinase family.

It carries out the reaction L-seryl-[protein] + ATP = O-phospho-L-seryl-[protein] + ADP + H(+). The enzyme catalyses L-threonyl-[protein] + ATP = O-phospho-L-threonyl-[protein] + ADP + H(+). Promotes K(+) uptake, by the potassium transporter TRK1-TRK2, which leads to the subsequent cellular resistance to toxic cations such as Na(+), Li(+) and Ca(2+). In Saccharomyces cerevisiae (strain ATCC 204508 / S288c) (Baker's yeast), this protein is Serine/threonine-protein kinase HAL4/SAT4 (SAT4).